Here is a 275-residue protein sequence, read N- to C-terminus: NH(3)-dependent NAD(+) synthetase (275 aa).

46 to 53 (GISGGQDS) contributes to the ATP binding site. Asp52 serves as a coordination point for Mg(2+). Arg140 is a deamido-NAD(+) binding site. Thr160 is a binding site for ATP. Residue Glu165 coordinates Mg(2+). 2 residues coordinate deamido-NAD(+): Lys173 and Asp180. Residues Lys189 and Thr211 each contribute to the ATP site. 260 to 261 (HK) serves as a coordination point for deamido-NAD(+).

It belongs to the NAD synthetase family. Homodimer.

It carries out the reaction deamido-NAD(+) + NH4(+) + ATP = AMP + diphosphate + NAD(+) + H(+). The protein operates within cofactor biosynthesis; NAD(+) biosynthesis; NAD(+) from deamido-NAD(+) (ammonia route): step 1/1. Its function is as follows. Catalyzes the ATP-dependent amidation of deamido-NAD to form NAD. Uses ammonia as a nitrogen source. The chain is NH(3)-dependent NAD(+) synthetase from Salmonella dublin (strain CT_02021853).